The primary structure comprises 851 residues: UPF0182 protein CYA_1810 (851 aa).

The next 7 membrane-spanning stretches (helical) occupy residues 7–27, 47–67, 76–96, 141–161, 168–188, 220–240, and 259–279; these read GLVLLLWAGLGILAITALASF, VLARWGLGLGAFAFALAVVGS, ASTAGAWAIALGLSGGLAWSL, FNLVLLTLITVALIYLVELGL, LALSLFAQRHLLILGGALFLL, LPATTLMSGVAFLTAVGFWAL, and WASSLLAPALLWGAYLGFGLL.

This sequence belongs to the UPF0182 family.

The protein resides in the cell membrane. The chain is UPF0182 protein CYA_1810 from Synechococcus sp. (strain JA-3-3Ab) (Cyanobacteria bacterium Yellowstone A-Prime).